Reading from the N-terminus, the 156-residue chain is Protein LlR18A (156 aa).

Positions 8 and 28 each coordinate trans-zeatin. The Ca(2+) site is built by proline 32 and isoleucine 38. Residues lysine 54, aspartate 133, and lysine 136 each coordinate trans-zeatin.

Belongs to the BetVI family. Expressed constitutively in roots.

Its subcellular location is the cytoplasm. It is found in the cytosol. Class II ribonuclease (RNase). Binds to cytokinins. Interacts with melatonin. The sequence is that of Protein LlR18A (LLR18A) from Lupinus luteus (European yellow lupine).